The chain runs to 1213 residues: DNA-directed RNA polymerase subunit beta' (1213 aa).

4 residues coordinate Zn(2+): C60, C62, C75, and C78. The Mg(2+) site is built by D450, D452, and D454. Zn(2+) contacts are provided by C819, C893, C900, and C903.

It belongs to the RNA polymerase beta' chain family. In terms of assembly, the RNAP catalytic core consists of 2 alpha, 1 beta, 1 beta' and 1 omega subunit. When a sigma factor is associated with the core the holoenzyme is formed, which can initiate transcription. Mg(2+) serves as cofactor. It depends on Zn(2+) as a cofactor.

It catalyses the reaction RNA(n) + a ribonucleoside 5'-triphosphate = RNA(n+1) + diphosphate. In terms of biological role, DNA-dependent RNA polymerase catalyzes the transcription of DNA into RNA using the four ribonucleoside triphosphates as substrates. The chain is DNA-directed RNA polymerase subunit beta' from Streptococcus pyogenes serotype M6 (strain ATCC BAA-946 / MGAS10394).